Reading from the N-terminus, the 298-residue chain is MSTSIPDVAVHDSPAIAAPLRWVGMDGIVVPVQLTTADGGQHVIGRARAQIDLPAMGVKGIHMSRLYRLLDTYAVEPLTPVGICGLLSAMVNSHADCASTAARVDWYFDWLRRVPALVSNDLSGWRGYPVWLRAEYSAGHVQFWLCVEVAYSSTCPCSAALARQMLADAFLQEHVEVSALSPETVADWLRSNGSYATPHSQRSLARIEVALTEQAVELGLPALVDCAERILSTPVQAAVRRVDEQAFARLNGANLMYVEDATRRLQHGLAIHYSAFRVHVRHLESLHPNDAVASTADE.

It belongs to the GTP cyclohydrolase IV family.

It carries out the reaction GTP + H2O = 7,8-dihydroneopterin 3'-triphosphate + formate + H(+). It participates in cofactor biosynthesis; 7,8-dihydroneopterin triphosphate biosynthesis; 7,8-dihydroneopterin triphosphate from GTP: step 1/1. In terms of biological role, converts GTP to 7,8-dihydroneopterin triphosphate. The chain is GTP cyclohydrolase FolE2 from Xylella fastidiosa (strain M23).